Consider the following 394-residue polypeptide: NAD(P)H-quinone oxidoreductase subunit H (394 aa).

It belongs to the complex I 49 kDa subunit family. In terms of assembly, NDH-1 can be composed of about 15 different subunits; different subcomplexes with different compositions have been identified which probably have different functions.

It localises to the cellular thylakoid membrane. The enzyme catalyses a plastoquinone + NADH + (n+1) H(+)(in) = a plastoquinol + NAD(+) + n H(+)(out). It carries out the reaction a plastoquinone + NADPH + (n+1) H(+)(in) = a plastoquinol + NADP(+) + n H(+)(out). Its function is as follows. NDH-1 shuttles electrons from an unknown electron donor, via FMN and iron-sulfur (Fe-S) centers, to quinones in the respiratory and/or the photosynthetic chain. The immediate electron acceptor for the enzyme in this species is believed to be plastoquinone. Couples the redox reaction to proton translocation, and thus conserves the redox energy in a proton gradient. Cyanobacterial NDH-1 also plays a role in inorganic carbon-concentration. This chain is NAD(P)H-quinone oxidoreductase subunit H, found in Picosynechococcus sp. (strain ATCC 27264 / PCC 7002 / PR-6) (Agmenellum quadruplicatum).